Here is a 457-residue protein sequence, read N- to C-terminus: Chromosomal replication initiator protein DnaA (457 aa).

The segment at 1 to 75 (MDAQLNNLWE…ALKIVTSRKF (75 aa)) is domain I, interacts with DnaA modulators. Residues 75–118 (FKIEFYLESDLEEEKENEEKQKEEKKENTNDVDGSIVVSDEMSA) are domain II. The domain III, AAA+ region stretch occupies residues 119–335 (TLNPKYTFQS…GALIRIIAYS (217 aa)). Residues Gly163, Gly165, Lys166, and Thr167 each contribute to the ATP site. Residues 336–457 (SLTNRDVSVD…NDITKKLTQK (122 aa)) form a domain IV, binds dsDNA region.

This sequence belongs to the DnaA family. In terms of assembly, oligomerizes as a right-handed, spiral filament on DNA at oriC.

The protein resides in the cytoplasm. Plays an essential role in the initiation and regulation of chromosomal replication. ATP-DnaA binds to the origin of replication (oriC) to initiate formation of the DNA replication initiation complex once per cell cycle. Binds the DnaA box (a 9 base pair repeat at the origin) and separates the double-stranded (ds)DNA. Forms a right-handed helical filament on oriC DNA; dsDNA binds to the exterior of the filament while single-stranded (ss)DNA is stabiized in the filament's interior. The ATP-DnaA-oriC complex binds and stabilizes one strand of the AT-rich DNA unwinding element (DUE), permitting loading of DNA polymerase. After initiation quickly degrades to an ADP-DnaA complex that is not apt for DNA replication. Binds acidic phospholipids. This Clostridium perfringens (strain ATCC 13124 / DSM 756 / JCM 1290 / NCIMB 6125 / NCTC 8237 / Type A) protein is Chromosomal replication initiator protein DnaA.